The sequence spans 152 residues: Large ribosomal subunit protein uL13 (152 aa).

Belongs to the universal ribosomal protein uL13 family. Part of the 50S ribosomal subunit.

This protein is one of the early assembly proteins of the 50S ribosomal subunit, although it is not seen to bind rRNA by itself. It is important during the early stages of 50S assembly. The polypeptide is Large ribosomal subunit protein uL13 (Borreliella afzelii (strain PKo) (Borrelia afzelii)).